We begin with the raw amino-acid sequence, 268 residues long: Tryptophan synthase alpha chain (268 aa).

Residues Glu49 and Asp60 each act as proton acceptor in the active site.

The protein belongs to the TrpA family. As to quaternary structure, tetramer of two alpha and two beta chains.

The catalysed reaction is (1S,2R)-1-C-(indol-3-yl)glycerol 3-phosphate + L-serine = D-glyceraldehyde 3-phosphate + L-tryptophan + H2O. Its pathway is amino-acid biosynthesis; L-tryptophan biosynthesis; L-tryptophan from chorismate: step 5/5. The alpha subunit is responsible for the aldol cleavage of indoleglycerol phosphate to indole and glyceraldehyde 3-phosphate. This is Tryptophan synthase alpha chain from Vibrio vulnificus (strain CMCP6).